The following is a 158-amino-acid chain: 6,7-dimethyl-8-ribityllumazine synthase (158 aa).

5-amino-6-(D-ribitylamino)uracil contacts are provided by residues Phe-22, 57-59 (AYE), and 81-83 (AVI). A (2S)-2-hydroxy-3-oxobutyl phosphate-binding site is contributed by 86 to 87 (GT). His-89 serves as the catalytic Proton donor. A 5-amino-6-(D-ribitylamino)uracil-binding site is contributed by Phe-114. Arg-128 contributes to the (2S)-2-hydroxy-3-oxobutyl phosphate binding site.

Belongs to the DMRL synthase family. Forms an icosahedral capsid composed of 60 subunits, arranged as a dodecamer of pentamers.

The enzyme catalyses (2S)-2-hydroxy-3-oxobutyl phosphate + 5-amino-6-(D-ribitylamino)uracil = 6,7-dimethyl-8-(1-D-ribityl)lumazine + phosphate + 2 H2O + H(+). Its pathway is cofactor biosynthesis; riboflavin biosynthesis; riboflavin from 2-hydroxy-3-oxobutyl phosphate and 5-amino-6-(D-ribitylamino)uracil: step 1/2. Functionally, catalyzes the formation of 6,7-dimethyl-8-ribityllumazine by condensation of 5-amino-6-(D-ribitylamino)uracil with 3,4-dihydroxy-2-butanone 4-phosphate. This is the penultimate step in the biosynthesis of riboflavin. This Pseudoalteromonas atlantica (strain T6c / ATCC BAA-1087) protein is 6,7-dimethyl-8-ribityllumazine synthase.